Here is a 506-residue protein sequence, read N- to C-terminus: NAD(P)H-quinone oxidoreductase subunit 2, chloroplastic (506 aa).

A run of 13 helical transmembrane segments spans residues 15–35 (LIPE…DLVY), 39–59 (CHAW…VLLG), 84–104 (LSLV…LLSI), 113–133 (APSE…LVAG), 137–157 (LLMM…LTGY), 172–192 (LLVG…MYGI), 217–237 (CALA…AAPF), 249–269 (PTPV…ILAV), 283–303 (WHLI…FIAV), 339–359 (IVYL…VILF), 382–402 (ALCL…AGFF), 418–438 (SLVW…LSVV), and 471–491 (VGIF…NSMV).

This sequence belongs to the complex I subunit 2 family. NDH is composed of at least 16 different subunits, 5 of which are encoded in the nucleus.

The protein resides in the plastid. The protein localises to the chloroplast thylakoid membrane. The catalysed reaction is a plastoquinone + NADH + (n+1) H(+)(in) = a plastoquinol + NAD(+) + n H(+)(out). It catalyses the reaction a plastoquinone + NADPH + (n+1) H(+)(in) = a plastoquinol + NADP(+) + n H(+)(out). Functionally, NDH shuttles electrons from NAD(P)H:plastoquinone, via FMN and iron-sulfur (Fe-S) centers, to quinones in the photosynthetic chain and possibly in a chloroplast respiratory chain. The immediate electron acceptor for the enzyme in this species is believed to be plastoquinone. Couples the redox reaction to proton translocation, and thus conserves the redox energy in a proton gradient. The polypeptide is NAD(P)H-quinone oxidoreductase subunit 2, chloroplastic (Nephroselmis olivacea (Green alga)).